A 464-amino-acid polypeptide reads, in one-letter code: Siroheme synthase (464 aa).

Residues 1–203 form a precorrin-2 dehydrogenase /sirohydrochlorin ferrochelatase region; the sequence is MEFLPLFHNL…GQGAEAERML (203 aa). Residues 22-23 and 43-44 contribute to the NAD(+) site; these read EI and PE. Residue S128 is modified to Phosphoserine. Residues 216-464 are uroporphyrinogen-III C-methyltransferase; sequence GEVYLVGAGP…AWFEGAQATL (249 aa). P225 is a binding site for S-adenosyl-L-methionine. D248 functions as the Proton acceptor in the catalytic mechanism. Residue K270 is the Proton donor of the active site. Residues 301–303, I306, 331–332, M383, and G412 contribute to the S-adenosyl-L-methionine site; these read GGD and TA.

In the N-terminal section; belongs to the precorrin-2 dehydrogenase / sirohydrochlorin ferrochelatase family. The protein in the C-terminal section; belongs to the precorrin methyltransferase family.

It catalyses the reaction uroporphyrinogen III + 2 S-adenosyl-L-methionine = precorrin-2 + 2 S-adenosyl-L-homocysteine + H(+). The catalysed reaction is precorrin-2 + NAD(+) = sirohydrochlorin + NADH + 2 H(+). It carries out the reaction siroheme + 2 H(+) = sirohydrochlorin + Fe(2+). The protein operates within cofactor biosynthesis; adenosylcobalamin biosynthesis; precorrin-2 from uroporphyrinogen III: step 1/1. It functions in the pathway cofactor biosynthesis; adenosylcobalamin biosynthesis; sirohydrochlorin from precorrin-2: step 1/1. It participates in porphyrin-containing compound metabolism; siroheme biosynthesis; precorrin-2 from uroporphyrinogen III: step 1/1. Its pathway is porphyrin-containing compound metabolism; siroheme biosynthesis; siroheme from sirohydrochlorin: step 1/1. The protein operates within porphyrin-containing compound metabolism; siroheme biosynthesis; sirohydrochlorin from precorrin-2: step 1/1. Its function is as follows. Multifunctional enzyme that catalyzes the SAM-dependent methylations of uroporphyrinogen III at position C-2 and C-7 to form precorrin-2 via precorrin-1. Then it catalyzes the NAD-dependent ring dehydrogenation of precorrin-2 to yield sirohydrochlorin. Finally, it catalyzes the ferrochelation of sirohydrochlorin to yield siroheme. The sequence is that of Siroheme synthase from Pseudomonas syringae pv. syringae (strain B728a).